The sequence spans 413 residues: MASSAGLALCAQTLVVRGGSRFLAFSTTGSDDDCVFTYDCSTAEKKATPEDKGEDGQPADTGSDSILASTFSKSGRYFALTDDSKRLILFRTKPWQCLSVRMVVRRCTALTFTASEDRVLVADKSGDVYSFSVLEPDGCGRLELGHLSMLLDVAVSPDDQFVLTADRDEKIRVSWAAAPHSIESFCLGHTEFVSRILVVPSHPELLLSSSGDGTLRLWEYRSGRQLQCCDLAGLQEPGEQPGHKGLAASRIAFWGQESYVVLLCECVPVVFVFQLDASRQQLVFRQRLTFPHRVWDVVFEEARGLWVLQDCRDAPLVLWRPVGGEWQAAPDGAVSPRLCSHLRESWAMLEGSVGTDDSFRSLYKATFDNMTSYLKKKEERLQQQLKKKRQRSPFPGSPEQTKKACPGQSALSC.

Position 2 is an N-acetylalanine (Ala-2). WD repeat units lie at residues 61–100, 102–141, 145–185, 188–228, and 289–329; these read TGSD…CLSV, MVVR…GCGR, GHLS…IESF, GHTE…QLQC, and TFPH…WQAA. The interval 380-413 is disordered; the sequence is RLQQQLKKKRQRSPFPGSPEQTKKACPGQSALSC. Phosphoserine occurs at positions 392 and 412.

It belongs to the WD repeat TRM82 family. In terms of assembly, non-catalytic component of the METTL1-WDR4 complex, composed of METTL1 and WDR4. Interacts with FEN1; the interaction is direct.

The protein localises to the nucleus. It localises to the chromosome. It functions in the pathway tRNA modification; N(7)-methylguanine-tRNA biosynthesis. In terms of biological role, non-catalytic component of the METTL1-WDR4 methyltransferase complex required for the formation of N(7)-methylguanine in a subset of RNA species, such as tRNAs, mRNAs and microRNAs (miRNAs). In the METTL1-WDR4 methyltransferase complex, WDR4 acts as a scaffold for tRNA-binding. Required for the formation of N(7)-methylguanine at position 46 (m7G46) in a large subset of tRNAs that contain the 5'-RAGGU-3' motif within the variable loop. M7G46 interacts with C13-G22 in the D-loop to stabilize tRNA tertiary structure and protect tRNAs from decay. Also required for the formation of N(7)-methylguanine at internal sites in a subset of mRNAs. Also required for methylation of a specific subset of miRNAs, such as let-7. Acts as a regulator of embryonic stem cell self-renewal and differentiation. Independently of METTL1, also plays a role in genome stability: localizes at the DNA replication site and regulates endonucleolytic activities of FEN1. In Mus musculus (Mouse), this protein is tRNA (guanine-N(7)-)-methyltransferase non-catalytic subunit WDR4.